The sequence spans 392 residues: NADH-quinone oxidoreductase subunit D (392 aa).

This sequence belongs to the complex I 49 kDa subunit family. NDH-1 is composed of 14 different subunits. Subunits NuoB, C, D, E, F, and G constitute the peripheral sector of the complex.

It localises to the cell inner membrane. The catalysed reaction is a quinone + NADH + 5 H(+)(in) = a quinol + NAD(+) + 4 H(+)(out). NDH-1 shuttles electrons from NADH, via FMN and iron-sulfur (Fe-S) centers, to quinones in the respiratory chain. The immediate electron acceptor for the enzyme in this species is believed to be ubiquinone. Couples the redox reaction to proton translocation (for every two electrons transferred, four hydrogen ions are translocated across the cytoplasmic membrane), and thus conserves the redox energy in a proton gradient. This chain is NADH-quinone oxidoreductase subunit D, found in Parvibaculum lavamentivorans (strain DS-1 / DSM 13023 / NCIMB 13966).